The primary structure comprises 186 residues: Crossover junction endodeoxyribonuclease RuvC (186 aa).

Catalysis depends on residues aspartate 7, glutamate 73, and aspartate 145. Mg(2+) is bound by residues aspartate 7, glutamate 73, and aspartate 145.

It belongs to the RuvC family. In terms of assembly, homodimer which binds Holliday junction (HJ) DNA. The HJ becomes 2-fold symmetrical on binding to RuvC with unstacked arms; it has a different conformation from HJ DNA in complex with RuvA. In the full resolvosome a probable DNA-RuvA(4)-RuvB(12)-RuvC(2) complex forms which resolves the HJ. The cofactor is Mg(2+).

Its subcellular location is the cytoplasm. It carries out the reaction Endonucleolytic cleavage at a junction such as a reciprocal single-stranded crossover between two homologous DNA duplexes (Holliday junction).. The RuvA-RuvB-RuvC complex processes Holliday junction (HJ) DNA during genetic recombination and DNA repair. Endonuclease that resolves HJ intermediates. Cleaves cruciform DNA by making single-stranded nicks across the HJ at symmetrical positions within the homologous arms, yielding a 5'-phosphate and a 3'-hydroxyl group; requires a central core of homology in the junction. The consensus cleavage sequence is 5'-(A/T)TT(C/G)-3'. Cleavage occurs on the 3'-side of the TT dinucleotide at the point of strand exchange. HJ branch migration catalyzed by RuvA-RuvB allows RuvC to scan DNA until it finds its consensus sequence, where it cleaves and resolves the cruciform DNA. The polypeptide is Crossover junction endodeoxyribonuclease RuvC (Acidovorax sp. (strain JS42)).